The primary structure comprises 267 residues: Thiamine pyrophosphokinase 1 (267 aa).

The protein belongs to the thiamine pyrophosphokinase family. In terms of tissue distribution, expressed in roots, leaves and flowers.

Its subcellular location is the cytoplasm. It is found in the cytosol. It catalyses the reaction thiamine + ATP = thiamine diphosphate + AMP + H(+). It functions in the pathway cofactor biosynthesis; thiamine diphosphate biosynthesis; thiamine diphosphate from thiamine: step 1/1. Catalyzes the phosphorylation of thiamine to thiamine pyrophosphate (TPP). TPP is an active cofactor for enzymes involved in glycolysis and energy production. Plant leaves require high levels of TPP for photosynthesis and carbohydrate metabolism. The sequence is that of Thiamine pyrophosphokinase 1 from Arabidopsis thaliana (Mouse-ear cress).